The chain runs to 2216 residues: RNA-directed RNA polymerase L (2216 aa).

The segment at 26-289 (KTSFLSQVNL…ETRTAMLDER (264 aa)) is endonuclease. The Mn(2+) site is built by E51, D88, and E101. The active site involves K114. In terms of domain architecture, RdRp catalytic spans 1167-1364 (LDMKCVVRLS…YLSSKFNKFV (198 aa)). Position 1323 (D1323) interacts with Mg(2+).

Belongs to the Bunyavirales RNA polymerase family. In terms of assembly, homomultimer; the oligomeric structure is essential for the polymerase activity. Interacts with nucleoprotein N. Interacts with protein Z; this interaction inhibits viral transcription and replication, Z partially blocks the product exit tunnel for the releasing nascent RNA product. Mn(2+) serves as cofactor. Mg(2+) is required as a cofactor.

It is found in the virion. It localises to the host cytoplasm. The catalysed reaction is RNA(n) + a ribonucleoside 5'-triphosphate = RNA(n+1) + diphosphate. Functionally, RNA-dependent RNA polymerase, which is responsible for the replication and transcription of the viral RNA genome using antigenomic RNA as an intermediate. During transcription, synthesizes subgenomic RNAs and assures their capping by a cap-snatching mechanism, which involves the endonuclease activity cleaving the host capped pre-mRNAs. These short capped RNAs are then used as primers for viral transcription. The 3'-end of subgenomic mRNAs molecules are heterogeneous and not polyadenylated. The replicase function is to direct synthesis of antigenomic and genomic RNA which are encapsidated and non capped. As a consequence of the use of the same enzyme for both transcription and replication, these mechanisms need to be well coordinated. These processes may be regulated by proteins N and Z in a dose-dependent manner. Z protein inhibits the viral polymerase L und thus the viral transcription and RNA synthesis. The protein is RNA-directed RNA polymerase L of Bear Canyon mammarenavirus (isolate Mouse/United States/AV A0070039/2000) (BCNV).